The primary structure comprises 112 residues: Iron-sulfur cluster assembly protein CyaY (112 aa).

Belongs to the frataxin family.

Functionally, involved in iron-sulfur (Fe-S) cluster assembly. May act as a regulator of Fe-S biogenesis. The chain is Iron-sulfur cluster assembly protein CyaY from Janthinobacterium sp. (strain Marseille) (Minibacterium massiliensis).